Reading from the N-terminus, the 145-residue chain is Cystatin-like 1 (145 aa).

The signal sequence occupies residues 1–19 (MGIGCWRNPLLLLIALVLS). The Cystatin domain occupies 37 to 115 (SKKNMNSTLN…KKLRKSLICE (79 aa)). Asparagine 42 is a glycosylation site (N-linked (GlcNAc...) asparagine). 2 cysteine pairs are disulfide-bonded: cysteine 91–cysteine 101 and cysteine 114–cysteine 134.

Belongs to the cystatin family.

It localises to the secreted. This Homo sapiens (Human) protein is Cystatin-like 1 (CSTL1).